We begin with the raw amino-acid sequence, 287 residues long: N-methyltransferase verN (287 aa).

Belongs to the methyltransferase superfamily. LaeA methyltransferase family.

Its pathway is mycotoxin biosynthesis. In terms of biological role, N-methyltransferase; part of the gene cluster that mediates the biosynthesis of 11'-deoxyverticillin A, one of the dimeric epipolythiodioxopiperazines (ETPs) from the verticillin family that act as mycotoxins. 11'-deoxyverticillin A is required for normal conidiation. The nonribosomal peptide synthetase verP is speculated to be responsible for condensation of amino acids to form the carbon skeleton of verticillin, whereas the cluster-specific tailoring enzymes are involved in further modifications leading to the production of 11'-deoxyverticillin A. This Clonostachys rogersoniana protein is N-methyltransferase verN.